A 37-amino-acid chain; its full sequence is Conotoxin Bt1.8 (37 aa).

The propeptide occupies 1 to 20; the sequence is PDGRNAAAKAFDLITPTVRK. Disulfide bonds link C22–C28 and C23–C36. At C36 the chain carries Cysteine amide.

The protein belongs to the conotoxin A superfamily. In terms of tissue distribution, expressed by the venom duct.

It is found in the secreted. Its function is as follows. Alpha-conotoxins bind to the nicotinic acetylcholine receptors (nAChR) and inhibit them. This toxin inhibits mammalian alpha-3-beta-2/CHRNA3-CHRNB2 nAChR (IC(50)=9.4 nM (rat), IC(50)=8.8 nM (human)), as well as the subunit chimera alpha-6/alpha-3-beta-2-beta-3 nAChR (CHRNA6/CHRNA3-CHRNB2-CHRNB3)(IC(50)=2.1 nM (rat), IC(50)=1.7 nM (human)). Binds to rat alpha-6/alpha-3-beta-2-beta-3 more rapidly than to alpha-3-beta-2, and dissociates more rapidly from alpha-3-beta-2 than from alpha-6/alpha-3-beta-2-beta-3. This is Conotoxin Bt1.8 from Conus betulinus (Beech cone).